Consider the following 66-residue polypeptide: uncharacterized protein (66 aa).

This is an uncharacterized protein from Frog virus 3 (isolate Goorha) (FV-3).